A 267-amino-acid polypeptide reads, in one-letter code: Cilia- and flagella-associated protein 300 (267 aa).

Belongs to the CFAP300 family.

It is found in the cytoplasm. The protein localises to the cytoskeleton. The protein resides in the cilium axoneme. In terms of biological role, cilium- and flagellum-specific protein that plays a role in axonemal structure organization and motility. May play a role in outer and inner dynein arm assembly. The polypeptide is Cilia- and flagella-associated protein 300 (Xenopus tropicalis (Western clawed frog)).